We begin with the raw amino-acid sequence, 346 residues long: Probable galacturonosyltransferase-like 6 (346 aa).

A helical; Signal-anchor for type II membrane protein membrane pass occupies residues 1-21 (MLWITRFAGLFSAAMAVIVLS). The Lumenal portion of the chain corresponds to 22–346 (PSLQSFPPAA…TPYDLYRHSH (325 aa)). Asn203 carries an N-linked (GlcNAc...) asparagine glycan.

This sequence belongs to the glycosyltransferase 8 family.

It localises to the golgi apparatus membrane. It functions in the pathway glycan metabolism; pectin biosynthesis. Functionally, may be involved in pectin and/or xylans biosynthesis in cell walls. This Arabidopsis thaliana (Mouse-ear cress) protein is Probable galacturonosyltransferase-like 6 (GATL6).